Reading from the N-terminus, the 534-residue chain is Pentatricopeptide repeat-containing protein At5g59600 (534 aa).

12 PPR repeats span residues 50–80 (LTRI…MPKR), 81–115 (DISG…GLKL), 116–150 (DAFI…SYES), 151–181 (DAFI…LGEQ), 182–216 (DLVV…GIKP), 217–251 (DVIT…GYKP), 252–286 (DVVS…GLYP), 287–321 (NSAT…GLED), 322–352 (HGFV…TPKK), 353–387 (TTVT…GEKL), 388–418 (DHLT…MQNK), and 424–454 (RLEH…MRME). A type E motif region spans residues 459-534 (VWGALLAACR…FLGSSWVETV (76 aa)).

This sequence belongs to the PPR family. PCMP-E subfamily.

The chain is Pentatricopeptide repeat-containing protein At5g59600 (PCMP-E1) from Arabidopsis thaliana (Mouse-ear cress).